The sequence spans 451 residues: UDP-N-acetylmuramoylalanine--D-glutamate ligase (451 aa).

120–126 (GSNGKTT) is an ATP binding site.

The protein belongs to the MurCDEF family.

The protein localises to the cytoplasm. It catalyses the reaction UDP-N-acetyl-alpha-D-muramoyl-L-alanine + D-glutamate + ATP = UDP-N-acetyl-alpha-D-muramoyl-L-alanyl-D-glutamate + ADP + phosphate + H(+). It functions in the pathway cell wall biogenesis; peptidoglycan biosynthesis. Its function is as follows. Cell wall formation. Catalyzes the addition of glutamate to the nucleotide precursor UDP-N-acetylmuramoyl-L-alanine (UMA). The sequence is that of UDP-N-acetylmuramoylalanine--D-glutamate ligase from Bacillus velezensis (strain DSM 23117 / BGSC 10A6 / LMG 26770 / FZB42) (Bacillus amyloliquefaciens subsp. plantarum).